The primary structure comprises 718 residues: Phospholipid phosphatase-related protein type 3 (718 aa).

Helical transmembrane passes span 18-38 (LPCF…SLYF), 70-90 (LIPL…SIMV), and 133-153 (FVGV…VIQL). An N-linked (GlcNAc...) asparagine glycan is attached at asparagine 169. 3 consecutive transmembrane segments (helical) span residues 207–227 (HATL…SVIS), 233–253 (LKPI…LTQI), and 263–283 (VYAG…HAVG). Residues 313 to 347 (SVYQQNKSVSTDELGPPGRLEGAPRPVAREKTSLG) are disordered. Over residues 314 to 323 (VYQQNKSVST) the composition is skewed to polar residues. Asparagine 318 is a glycosylation site (N-linked (GlcNAc...) asparagine). Residues serine 322 and serine 353 each carry the phosphoserine modification. A Phosphothreonine modification is found at threonine 376. A disordered region spans residues 416-488 (LEGRGLGLPD…GPRVILPPRA (73 aa)). A Phosphoserine modification is found at serine 428. The segment covering 439–462 (MAEEEEEEEDEEEEEEEEEEEDEG) has biased composition (acidic residues). Serine 508 is subject to Phosphoserine. Low complexity predominate over residues 545 to 571 (APGAPGPKAAETASSSSASSDSSQYRS). Residues 545 to 577 (APGAPGPKAAETASSSSASSDSSQYRSPSDRDS) are disordered. Serine 641 is modified (phosphoserine). The segment covering 664-680 (GEGLPPLGAADGALGPG) has biased composition (low complexity). Positions 664–702 (GEGLPPLGAADGALGPGSRESTLRRHAGGLGLAEREAEA) are disordered.

Belongs to the PA-phosphatase related phosphoesterase family.

The protein resides in the membrane. The chain is Phospholipid phosphatase-related protein type 3 from Homo sapiens (Human).